Here is a 198-residue protein sequence, read N- to C-terminus: ATP-dependent Clp protease proteolytic subunit (198 aa).

The Nucleophile role is filled by Ser102. Residue His127 is part of the active site.

It belongs to the peptidase S14 family. In terms of assembly, fourteen ClpP subunits assemble into 2 heptameric rings which stack back to back to give a disk-like structure with a central cavity, resembling the structure of eukaryotic proteasomes.

It is found in the cytoplasm. The catalysed reaction is Hydrolysis of proteins to small peptides in the presence of ATP and magnesium. alpha-casein is the usual test substrate. In the absence of ATP, only oligopeptides shorter than five residues are hydrolyzed (such as succinyl-Leu-Tyr-|-NHMec, and Leu-Tyr-Leu-|-Tyr-Trp, in which cleavage of the -Tyr-|-Leu- and -Tyr-|-Trp bonds also occurs).. Functionally, cleaves peptides in various proteins in a process that requires ATP hydrolysis. Has a chymotrypsin-like activity. Plays a major role in the degradation of misfolded proteins. The sequence is that of ATP-dependent Clp protease proteolytic subunit from Brachyspira hyodysenteriae (strain ATCC 49526 / WA1).